The chain runs to 253 residues: NAD(P)H-quinone oxidoreductase subunit K (253 aa).

[4Fe-4S] cluster is bound by residues C68, C69, C133, and C164.

Belongs to the complex I 20 kDa subunit family. NDH-1 can be composed of about 15 different subunits; different subcomplexes with different compositions have been identified which probably have different functions. The cofactor is [4Fe-4S] cluster.

Its subcellular location is the cellular thylakoid membrane. The enzyme catalyses a plastoquinone + NADH + (n+1) H(+)(in) = a plastoquinol + NAD(+) + n H(+)(out). The catalysed reaction is a plastoquinone + NADPH + (n+1) H(+)(in) = a plastoquinol + NADP(+) + n H(+)(out). NDH-1 shuttles electrons from an unknown electron donor, via FMN and iron-sulfur (Fe-S) centers, to quinones in the respiratory and/or the photosynthetic chain. The immediate electron acceptor for the enzyme in this species is believed to be plastoquinone. Couples the redox reaction to proton translocation, and thus conserves the redox energy in a proton gradient. Cyanobacterial NDH-1 also plays a role in inorganic carbon-concentration. This Synechococcus sp. (strain CC9311) protein is NAD(P)H-quinone oxidoreductase subunit K.